We begin with the raw amino-acid sequence, 189 residues long: Frataxin-like protein, mitochondrial (189 aa).

Residues 1–50 (MNCARLHQRIPLRAMALTTTSYPALAPSHSFANASTSVMTASAMAVAHRA) constitute a mitochondrion transit peptide.

Belongs to the frataxin family. In terms of assembly, interacts with IscU; the interaction is direct.

It is found in the mitochondrion. It carries out the reaction 4 Fe(2+) + O2 + 4 H(+) = 4 Fe(3+) + 2 H2O. Iron-binding protein which binds 2 iron atoms per monomer. Probably, acts as an iron carrier for the biosynthesis of Fe-S clusters. Stimulates the cysteine desulphurase activity of IscS in the presence of IscU. In Leishmania donovani, this protein is Frataxin-like protein, mitochondrial.